The sequence spans 843 residues: Aconitase AMT8-2 (843 aa).

Position 258 to 260 (258 to 260 (DSH)) interacts with substrate. Cys-450, Cys-513, and Cys-516 together coordinate [4Fe-4S] cluster. Residues Arg-536, Arg-541, and 712–713 (SR) each bind substrate.

Belongs to the aconitase/IPM isomerase family.

It functions in the pathway mycotoxin biosynthesis. Aconitase; part of the gene clusters that mediate the biosynthesis of AM-toxins, host-selective toxins (HSTs) causing Alternaria blotch on apple, a worldwide distributed disease. AM-toxins are cyclic depsipeptides containing the 3 residues 2-hydroxy-isovaleric acid (2-HIV), dehydroalanine, L-alanine which are common for all 3 AM-toxins I to III. The fourth precursor is L-alpha-amino-methoxyphenyl-valeric acid (L-Amv) for AM-toxin I, L-alpha-amino-phenyl-valeric acid (L-Apv) for AM-toxin II, and L-alpha-amino-hydroxyphenyl-valeric acid (L-Ahv) for AM-toxin III. AM-toxins have two target sites for affecting susceptible apple cells; they cause invagination of the plasma membrane and electrolyte loss and chloroplast disorganization. The non-ribosomal peptide synthetase AMT1 contains 4 catalytic modules and is responsible for activation of each residue in AM-toxin. The aldo-keto reductase AMT2 catalyzes the conversion of 2-keto-isovaleric acid (2-KIV) to 2-hydroxy-isovaleric acid (2-HIV), one of the precursor residues incorporated by AMT1 during AM-toxin biosynthesis, by reduction of its ketone to an alcohol. The cytochrome P450 monooxygenase AMT3 and the thioesterase AMT4 are also important for AM-toxin production, but their exact function within the AM-toxin biosynthesis are not known yet. Up to 21 proteins (including AMT1 to AMT4) are predicted to be involved in AM-toxin biosynthesis since their expression ishighly up-regulated in AM-toxin-producing cultures. This is Aconitase AMT8-2 from Alternaria alternata (Alternaria rot fungus).